The following is a 693-amino-acid chain: MNTAITATTPTEYSYNDRYINRELSILDFHLRVLEQAVDPLHPLLERMNFLLIFSRNLDEFFEIRVAGVMEQFALGNESRSPDGLTPRQVLQKISETAHAAIERQYRILNEEILPKLREEDICFLRRGELTPAQSAWVKKYFQEQVAPVLTPISLDPAHPFPRLVNKSLNFIVTLEGKDAFGRQIDLAVVPAPRSLPRVVRLPDELTGGKEHHVMLSAIIHEHVSDLFPGMTATGCYQFRVTRNADLALNEDVEDLAKALKGELSSRRFGRAVRLEVTQNCPQHIYEYLLEEFDLNEEQLYKVDGPVNLARLVSNFKRPHLRYDSHTPVVPKVFKKTESIFSAMQKQDILLHHPFESFAPVIQLLREAARDPQVLAIKQTLYRSGADSEIVQVLAEAARNGKEVTAVIELRARFDEESNIEVANVLQEAGAVVVYGIVGYKTHAKMIMVVRRENNKLVRYVHLGTGNYHAMNARIYTDYGLMTTDKDLCEDVHRIFQELTGMGKMAKLKKLLHAPFTLHAQLINFIDEEIANAKAGRKAQIIVKVNALTEVQLINKLYEASQAGVQVDLIIRYDLLFTSGITKFIGKHSGTFNCRTVSFEHTRVYYFSNNGDARIYCSSADWMDRNLFNRVEACFPIEDPALKKRIYQQGLLNYLQDNQQAWLLQGDGTWVRAQPAAGEKLHNAQRELLETFK.

Residue N57 coordinates ATP. Mg(2+) is bound by residues R383 and R413. The active-site Phosphohistidine intermediate is the H443. The ATP site is built by Y476, R572, and H601.

This sequence belongs to the polyphosphate kinase 1 (PPK1) family. Requires Mg(2+) as cofactor. In terms of processing, an intermediate of this reaction is the autophosphorylated ppk in which a phosphate is covalently linked to a histidine residue through a N-P bond.

The enzyme catalyses [phosphate](n) + ATP = [phosphate](n+1) + ADP. Its function is as follows. Catalyzes the reversible transfer of the terminal phosphate of ATP to form a long-chain polyphosphate (polyP). This is Polyphosphate kinase from Acinetobacter baumannii (strain ATCC 17978 / DSM 105126 / CIP 53.77 / LMG 1025 / NCDC KC755 / 5377).